We begin with the raw amino-acid sequence, 1185 residues long: Calmodulin-binding transcription activator homolog 1 (1185 aa).

The segment at residues alanine 72–isoleucine 200 is a DNA-binding region (CG-1). Disordered stretches follow at residues glycine 252–serine 277 and lysine 390–threonine 411. Low complexity predominate over residues serine 393–threonine 411. The IPT/TIG domain maps to glutamate 418 to glutamate 498. The ANK repeat unit spans residues aspartate 616–valine 646. One can recognise an IQ domain in the interval glutamate 957–arginine 984. Residues cysteine 1121 to alanine 1185 form a disordered region. Over residues glutamine 1128–proline 1147 the composition is skewed to basic and acidic residues.

Belongs to the CAMTA family. May interact with calmodulin. Expressed broadly in the nervous system.

The protein localises to the nucleus. Transcription factor. Positively modulates neuronal levels of the ubiquitous Ca2+ sensor calmodulin/cmd-1, probably by direct binding to the cmd-1 promoter, thereby regulating Ca2+ signaling, physiology, and behavior. The sequence is that of Calmodulin-binding transcription activator homolog 1 from Caenorhabditis elegans.